Reading from the N-terminus, the 305-residue chain is uncharacterized protein (305 aa).

10 helical membrane passes run 11 to 31, 37 to 57, 70 to 90, 97 to 117, 126 to 146, 148 to 168, 180 to 200, 217 to 237, 244 to 264, and 265 to 285; these read LLLAFLVIMWGVNWPLSKAAL, LLFAGIRTLIGGLLLVIVALP, IYLVSALLNITLFYGLQTIGL, LFSAIVFFQPVLMGVFSWLWL, VIGLILGFAGVAVISAAGFGG, ISVIGVLLALGSAVSWALGTV, IWMVALQLTIGSVFLLISGFW, LLFISVFVIALGWLVFFTLVG, VASYTFLIPLISIVASSIFLH, and EPLTLSLLAGLLLIVTSICLV. EamA domains follow at residues 18 to 141 and 161 to 287; these read IMWG…VISA and VSWA…LVNT.

Belongs to the EamA transporter family.

The protein resides in the cell membrane. This is an uncharacterized protein from Bacillus subtilis (strain 168).